A 515-amino-acid polypeptide reads, in one-letter code: 2-isopropylmalate synthase (515 aa).

Residues 4-264 enclose the Pyruvate carboxyltransferase domain; sequence VKIFDTTLRD…NIGINQDTTQ (261 aa). The Mn(2+) site is built by aspartate 13, histidine 201, histidine 203, and asparagine 237. A regulatory domain region spans residues 390–515; that stretch reads ELDYLSVNTG…RQTTSAQEGI (126 aa).

The protein belongs to the alpha-IPM synthase/homocitrate synthase family. LeuA type 1 subfamily. As to quaternary structure, homodimer. The cofactor is Mn(2+).

The protein localises to the cytoplasm. It carries out the reaction 3-methyl-2-oxobutanoate + acetyl-CoA + H2O = (2S)-2-isopropylmalate + CoA + H(+). It participates in amino-acid biosynthesis; L-leucine biosynthesis; L-leucine from 3-methyl-2-oxobutanoate: step 1/4. Functionally, catalyzes the condensation of the acetyl group of acetyl-CoA with 3-methyl-2-oxobutanoate (2-ketoisovalerate) to form 3-carboxy-3-hydroxy-4-methylpentanoate (2-isopropylmalate). The protein is 2-isopropylmalate synthase of Halothermothrix orenii (strain H 168 / OCM 544 / DSM 9562).